A 394-amino-acid polypeptide reads, in one-letter code: Elongation factor Tu 1 (394 aa).

The tr-type G domain maps to 10–204; it reads KPHVNVGTIG…ALDSYIPEPE (195 aa). Positions 19–26 are G1; it reads GHVDHGKT. Position 19-26 (19-26) interacts with GTP; the sequence is GHVDHGKT. A Mg(2+)-binding site is contributed by T26. Positions 60–64 are G2; that stretch reads GITIN. The segment at 81–84 is G3; the sequence is DCPG. GTP contacts are provided by residues 81–85 and 136–139; these read DCPGH and NKCD. The G4 stretch occupies residues 136–139; that stretch reads NKCD. A G5 region spans residues 174–176; that stretch reads SAL.

The protein belongs to the TRAFAC class translation factor GTPase superfamily. Classic translation factor GTPase family. EF-Tu/EF-1A subfamily. In terms of assembly, monomer.

The protein resides in the cytoplasm. It carries out the reaction GTP + H2O = GDP + phosphate + H(+). GTP hydrolase that promotes the GTP-dependent binding of aminoacyl-tRNA to the A-site of ribosomes during protein biosynthesis. This chain is Elongation factor Tu 1, found in Shewanella oneidensis (strain ATCC 700550 / JCM 31522 / CIP 106686 / LMG 19005 / NCIMB 14063 / MR-1).